The sequence spans 155 residues: MPGQTQKTPAFTTDQFLDLINRLFGLDLAIVSERNIPLIINRLDDINLKLLLAKMMVNGMDEFIPFRHSPEGIRSINVEQIPPASGDPVDTPDYRLSIEYKNGEQDNFICTYDETKWKCTARDVDEITSIIGKRSQANSKNDSNSKDDLPNPFSV.

The disordered stretch occupies residues 135-155; that stretch reads SQANSKNDSNSKDDLPNPFSV.

This is an uncharacterized protein from Acidianus convivator (ATV).